The following is a 451-amino-acid chain: Tubulin alpha chain (451 aa).

Gln11 is a binding site for GTP. N6-acetyllysine is present on Lys40. GTP is bound by residues Glu71, Gly144, Thr145, Thr179, Asn206, and Asn228. Glu71 is a Mg(2+) binding site. Glu254 is a catalytic residue.

It belongs to the tubulin family. As to quaternary structure, dimer of alpha and beta chains. A typical microtubule is a hollow water-filled tube with an outer diameter of 25 nm and an inner diameter of 15 nM. Alpha-beta heterodimers associate head-to-tail to form protofilaments running lengthwise along the microtubule wall with the beta-tubulin subunit facing the microtubule plus end conferring a structural polarity. Microtubules usually have 13 protofilaments but different protofilament numbers can be found in some organisms and specialized cells. Mg(2+) is required as a cofactor. Post-translationally, undergoes a tyrosination/detyrosination cycle, the cyclic removal and re-addition of a C-terminal tyrosine residue by the enzymes tubulin tyrosine carboxypeptidase (TTCP) and tubulin tyrosine ligase (TTL), respectively. In terms of processing, acetylation of alpha chains at Lys-40 stabilizes microtubules and affects affinity and processivity of microtubule motors. This modification has a role in multiple cellular functions, ranging from cell motility, cell cycle progression or cell differentiation to intracellular trafficking and signaling.

It is found in the cytoplasm. Its subcellular location is the cytoskeleton. The enzyme catalyses GTP + H2O = GDP + phosphate + H(+). Its function is as follows. Tubulin is the major constituent of microtubules, a cylinder consisting of laterally associated linear protofilaments composed of alpha- and beta-tubulin heterodimers. Microtubules grow by the addition of GTP-tubulin dimers to the microtubule end, where a stabilizing cap forms. Below the cap, tubulin dimers are in GDP-bound state, owing to GTPase activity of alpha-tubulin. This chain is Tubulin alpha chain (TUBA), found in Chlorella vulgaris (Green alga).